The following is a 587-amino-acid chain: Aspartate--tRNA ligase (587 aa).

Position 174 (glutamate 174) interacts with L-aspartate. The segment at glutamine 198–lysine 201 is aspartate. Arginine 220 is an L-aspartate binding site. Residues arginine 220–glutamate 222 and glutamine 229 each bind ATP. Histidine 443 provides a ligand contact to L-aspartate. An ATP-binding site is contributed by glutamate 477. Position 484 (arginine 484) interacts with L-aspartate. Residue glycine 529–arginine 532 coordinates ATP.

This sequence belongs to the class-II aminoacyl-tRNA synthetase family. Type 1 subfamily. In terms of assembly, homodimer.

It localises to the cytoplasm. The catalysed reaction is tRNA(Asp) + L-aspartate + ATP = L-aspartyl-tRNA(Asp) + AMP + diphosphate. Its function is as follows. Catalyzes the attachment of L-aspartate to tRNA(Asp) in a two-step reaction: L-aspartate is first activated by ATP to form Asp-AMP and then transferred to the acceptor end of tRNA(Asp). The chain is Aspartate--tRNA ligase from Streptococcus pneumoniae serotype 4 (strain ATCC BAA-334 / TIGR4).